We begin with the raw amino-acid sequence, 138 residues long: uncharacterized protein (138 aa).

Disordered stretches follow at residues 1-23 and 35-83; these read MPESAPSTPPSVNRRHEPEMLSE and ASPS…EDPV. A compositionally biased stretch (acidic residues) spans 60–69; that stretch reads DEETIPEEDD.

This is an uncharacterized protein from Schizosaccharomyces pombe (strain 972 / ATCC 24843) (Fission yeast).